A 644-amino-acid polypeptide reads, in one-letter code: Exoribonuclease 2 (644 aa).

In terms of domain architecture, RNB spans 189–516 (RQDLTALNFV…NHRLLKAVIK (328 aa)). The 83-residue stretch at 561–643 (NTRFAAEIID…ETRSIIARPA (83 aa)) folds into the S1 motif domain.

The protein belongs to the RNR ribonuclease family. RNase II subfamily.

The protein localises to the cytoplasm. It carries out the reaction Exonucleolytic cleavage in the 3'- to 5'-direction to yield nucleoside 5'-phosphates.. Its function is as follows. Involved in mRNA degradation. Hydrolyzes single-stranded polyribonucleotides processively in the 3' to 5' direction. The chain is Exoribonuclease 2 from Salmonella paratyphi A (strain ATCC 9150 / SARB42).